The chain runs to 278 residues: 4-deoxy-L-threo-5-hexosulose-uronate ketol-isomerase (278 aa).

Histidine 196, histidine 198, glutamate 203, and histidine 245 together coordinate Zn(2+).

The protein belongs to the KduI family. Zn(2+) serves as cofactor.

It carries out the reaction 5-dehydro-4-deoxy-D-glucuronate = 3-deoxy-D-glycero-2,5-hexodiulosonate. The protein operates within glycan metabolism; pectin degradation; 2-dehydro-3-deoxy-D-gluconate from pectin: step 4/5. In terms of biological role, catalyzes the isomerization of 5-dehydro-4-deoxy-D-glucuronate to 3-deoxy-D-glycero-2,5-hexodiulosonate. This is 4-deoxy-L-threo-5-hexosulose-uronate ketol-isomerase from Edwardsiella ictaluri (strain 93-146).